The following is a 287-amino-acid chain: ATP synthase gamma chain (287 aa).

It belongs to the ATPase gamma chain family. As to quaternary structure, F-type ATPases have 2 components, CF(1) - the catalytic core - and CF(0) - the membrane proton channel. CF(1) has five subunits: alpha(3), beta(3), gamma(1), delta(1), epsilon(1). CF(0) has three main subunits: a, b and c.

The protein resides in the cell inner membrane. Produces ATP from ADP in the presence of a proton gradient across the membrane. The gamma chain is believed to be important in regulating ATPase activity and the flow of protons through the CF(0) complex. This Geotalea uraniireducens (strain Rf4) (Geobacter uraniireducens) protein is ATP synthase gamma chain.